The chain runs to 226 residues: Glutathione peroxidase 3 (226 aa).

The first 24 residues, 1-24 (MARILRASCLLSLLLAGFVPPGRG), serve as a signal peptide directing secretion. Residue selenocysteine 73 is part of the active site. Residue selenocysteine 73 is a non-standard amino acid, selenocysteine.

Belongs to the glutathione peroxidase family. Homotetramer. In terms of tissue distribution, secreted in plasma.

It is found in the secreted. The enzyme catalyses 2 glutathione + H2O2 = glutathione disulfide + 2 H2O. It carries out the reaction tert-butyl hydroperoxide + 2 glutathione = tert-butanol + glutathione disulfide + H2O. Functionally, protects cells and enzymes from oxidative damage, by catalyzing the reduction of hydrogen peroxide, lipid peroxides and organic hydroperoxide, by glutathione. This is Glutathione peroxidase 3 from Rattus norvegicus (Rat).